The primary structure comprises 89 residues: uncharacterized protein (89 aa).

Helical transmembrane passes span 5-25 (AYLV…KRKA), 36-56 (RLWL…MQTF), and 67-87 (YGVP…YSPF).

Its subcellular location is the cell membrane. This is an uncharacterized protein from Bacillus subtilis (strain 168).